A 36-amino-acid polypeptide reads, in one-letter code: VPLEPVYPGDNATPEQMAHYAAELRRYINMLTRPRY.

Residue Tyr-36 is modified to Tyrosine amide.

It belongs to the NPY family.

It is found in the secreted. Hormone secreted by pancreatic cells that acts as a regulator of pancreatic and gastrointestinal functions probably by signaling through the G protein-coupled receptor NPY4R2. This is Pancreatic polypeptide (PPY) from Erinaceus europaeus (Western European hedgehog).